Reading from the N-terminus, the 433-residue chain is 3-phosphoshikimate 1-carboxyvinyltransferase (433 aa).

3 residues coordinate 3-phosphoshikimate: Lys-15, Ser-16, and Arg-20. Residue Lys-15 participates in phosphoenolpyruvate binding. Phosphoenolpyruvate contacts are provided by Gly-96 and Arg-124. 3-phosphoshikimate-binding residues include Ser-169, Gln-171, Ser-195, Asp-318, and Lys-345. Position 171 (Gln-171) interacts with phosphoenolpyruvate. The active-site Proton acceptor is Asp-318. Residues Arg-349 and Arg-393 each contribute to the phosphoenolpyruvate site.

The protein belongs to the EPSP synthase family. In terms of assembly, monomer.

The protein localises to the cytoplasm. The enzyme catalyses 3-phosphoshikimate + phosphoenolpyruvate = 5-O-(1-carboxyvinyl)-3-phosphoshikimate + phosphate. It participates in metabolic intermediate biosynthesis; chorismate biosynthesis; chorismate from D-erythrose 4-phosphate and phosphoenolpyruvate: step 6/7. Its function is as follows. Catalyzes the transfer of the enolpyruvyl moiety of phosphoenolpyruvate (PEP) to the 5-hydroxyl of shikimate-3-phosphate (S3P) to produce enolpyruvyl shikimate-3-phosphate and inorganic phosphate. This is 3-phosphoshikimate 1-carboxyvinyltransferase from Pelodictyon phaeoclathratiforme (strain DSM 5477 / BU-1).